A 488-amino-acid chain; its full sequence is Fumarate hydratase, mitochondrial (488 aa).

The N-terminal 24 residues, 1 to 24, are a transit peptide targeting the mitochondrion; that stretch reads MLRFTNCSCKTFVKSSYKLNIRRM. Residues 124-126, 154-157, 164-166, and Thr212 each bind substrate; these read SGT, HPNN, and SSN. The active-site Proton donor/acceptor is the His213. The active site involves Ser343. Substrate is bound by residues Ser344 and 349 to 351; that span reads KVN. A Phosphothreonine modification is found at Thr428.

This sequence belongs to the class-II fumarase/aspartase family. Fumarase subfamily. Homotetramer.

The protein localises to the mitochondrion matrix. The protein resides in the cytoplasm. It is found in the nucleus. It carries out the reaction (S)-malate = fumarate + H2O. The protein operates within carbohydrate metabolism; tricarboxylic acid cycle; (S)-malate from fumarate: step 1/1. Its function is as follows. Catalyzes the reversible stereospecific interconversion of fumarate to L-malate. In mitochondrion, catalyzes the hydration of fumarate to L-malate in the tricarboxylic acid (TCA) cycle to facilitate a transition step in the production of energy in the form of NADH. In cytoplasm and nucleus, involved in DNA repair in response to DNA damage: following DNA double-strand breaks (DSBs), translocates from the cytosol to the nucleus and promotes DNA repair by catalyzing the dehydration of L-malate to fumarate. This chain is Fumarate hydratase, mitochondrial, found in Saccharomyces cerevisiae (strain ATCC 204508 / S288c) (Baker's yeast).